The following is a 132-amino-acid chain: Small ribosomal subunit protein uS8c (132 aa).

The protein belongs to the universal ribosomal protein uS8 family. In terms of assembly, part of the 30S ribosomal subunit.

The protein resides in the plastid. Its subcellular location is the chloroplast. One of the primary rRNA binding proteins, it binds directly to 16S rRNA central domain where it helps coordinate assembly of the platform of the 30S subunit. In Thalassiosira pseudonana (Marine diatom), this protein is Small ribosomal subunit protein uS8c (rps8).